The primary structure comprises 388 residues: Dual-specificity RNA methyltransferase RlmN (388 aa).

The Proton acceptor role is filled by glutamate 109. Residues 115 to 354 (EEDRATLCVS…TIVRKTRGDD (240 aa)) form the Radical SAM core domain. Cysteines 122 and 359 form a disulfide. Cysteine 129, cysteine 133, and cysteine 136 together coordinate [4Fe-4S] cluster. S-adenosyl-L-methionine-binding positions include 183–184 (GE), serine 215, 237–239 (SLH), and asparagine 316. Cysteine 359 acts as the S-methylcysteine intermediate in catalysis.

This sequence belongs to the radical SAM superfamily. RlmN family. The cofactor is [4Fe-4S] cluster.

It localises to the cytoplasm. It carries out the reaction adenosine(2503) in 23S rRNA + 2 reduced [2Fe-2S]-[ferredoxin] + 2 S-adenosyl-L-methionine = 2-methyladenosine(2503) in 23S rRNA + 5'-deoxyadenosine + L-methionine + 2 oxidized [2Fe-2S]-[ferredoxin] + S-adenosyl-L-homocysteine. It catalyses the reaction adenosine(37) in tRNA + 2 reduced [2Fe-2S]-[ferredoxin] + 2 S-adenosyl-L-methionine = 2-methyladenosine(37) in tRNA + 5'-deoxyadenosine + L-methionine + 2 oxidized [2Fe-2S]-[ferredoxin] + S-adenosyl-L-homocysteine. Its function is as follows. Specifically methylates position 2 of adenine 2503 in 23S rRNA and position 2 of adenine 37 in tRNAs. m2A2503 modification seems to play a crucial role in the proofreading step occurring at the peptidyl transferase center and thus would serve to optimize ribosomal fidelity. This Klebsiella pneumoniae subsp. pneumoniae (strain ATCC 700721 / MGH 78578) protein is Dual-specificity RNA methyltransferase RlmN.